The chain runs to 714 residues: Sodium-dependent acetylcholine transporter (714 aa).

Positions 1–21 (MSVSSNDPEQRNGRGMASGNN) are disordered. Residues 1–74 (MSVSSNDPEQ…GNWSNKSDYL (74 aa)) lie on the Cytoplasmic side of the membrane. 3 helical membrane-spanning segments follow: residues 75 to 95 (LAVI…FLVF), 100 to 120 (AAFL…MFFM), and 152 to 172 (ISGF…FYLI). Residues 173–257 (NSFSFSIPWS…LSKGVDDFGT (85 aa)) are Extracellular-facing. N-linked (GlcNAc...) asparagine glycosylation is found at Asn-192, Asn-205, Asn-211, and Asn-222. 9 consecutive transmembrane segments (helical) span residues 258 to 278 (LNWY…LCLF), 287 to 307 (VVYV…TRLL), 336 to 356 (AAVQ…TIAS), 368 to 388 (IWLV…LTFS), 422 to 442 (AGVS…LLVV), 476 to 496 (VCAL…LFWM), 502 to 522 (FVLT…INWV), 548 to 568 (ILFK…LWLD), and 584 to 604 (ILTA…VGIW). The Cytoplasmic portion of the chain corresponds to 605–714 (QFCIAKGTIT…IPKFERETAI (110 aa)).

The protein belongs to the sodium:neurotransmitter symporter (SNF) (TC 2.A.22) family. In terms of assembly, interacts with stn-1; part of the DGC. In terms of tissue distribution, body wall, and vulval and enteric muscles.

The protein resides in the cell membrane. It localises to the postsynaptic cell membrane. Its function is as follows. Mediates sodium-dependent uptake of acetylcholine at neuromuscular junctions during periods of increased synaptic activity, may also prevent spillover to adjacent synaptic sites. Not involved in the uptake of other neurotransmitters (GABA, glycine, proline and glutamate) and there was also no inhibition of uptake by adding an excess of other candidate substrates (GABA, glycine, taurine, creatine, proline, alanine, carnitine, glutamate and betaine). Required for muscle integrity; altered transport of acetylcholine due to loss of dystrophin-glycoprotein complex (DGC) function results in muscle degeneration. The sequence is that of Sodium-dependent acetylcholine transporter from Caenorhabditis elegans.